The sequence spans 155 residues: SsrA-binding protein (155 aa).

The protein belongs to the SmpB family.

It is found in the cytoplasm. Functionally, required for rescue of stalled ribosomes mediated by trans-translation. Binds to transfer-messenger RNA (tmRNA), required for stable association of tmRNA with ribosomes. tmRNA and SmpB together mimic tRNA shape, replacing the anticodon stem-loop with SmpB. tmRNA is encoded by the ssrA gene; the 2 termini fold to resemble tRNA(Ala) and it encodes a 'tag peptide', a short internal open reading frame. During trans-translation Ala-aminoacylated tmRNA acts like a tRNA, entering the A-site of stalled ribosomes, displacing the stalled mRNA. The ribosome then switches to translate the ORF on the tmRNA; the nascent peptide is terminated with the 'tag peptide' encoded by the tmRNA and targeted for degradation. The ribosome is freed to recommence translation, which seems to be the essential function of trans-translation. This Streptococcus sanguinis (strain SK36) protein is SsrA-binding protein.